The following is a 152-amino-acid chain: Endoribonuclease YbeY (152 aa).

Residues His118, His122, and His128 each contribute to the Zn(2+) site.

Belongs to the endoribonuclease YbeY family. Requires Zn(2+) as cofactor.

The protein localises to the cytoplasm. Its function is as follows. Single strand-specific metallo-endoribonuclease involved in late-stage 70S ribosome quality control and in maturation of the 3' terminus of the 16S rRNA. The polypeptide is Endoribonuclease YbeY (Pelotomaculum thermopropionicum (strain DSM 13744 / JCM 10971 / SI)).